The chain runs to 655 residues: uncharacterized protein (655 aa).

The helical transmembrane segment at 5 to 25 threads the bilayer; it reads IIIIIFIVINFINIIISSITF. Disordered regions lie at residues 337–363 and 484–525; these read NSDY…NNNN and DKIG…SDNS. A compositionally biased stretch (low complexity) spans 515–524; sequence DNNSIGSSDN. The helical transmembrane segment at 588 to 608 threads the bilayer; it reads ILAVTISAIGIICVALLLTVV.

It localises to the membrane. This is an uncharacterized protein from Dictyostelium discoideum (Social amoeba).